The following is a 353-amino-acid chain: Peroxisome assembly protein 12-A (353 aa).

The Peroxisomal matrix portion of the chain corresponds to Met-1 to Ser-19. A helical membrane pass occupies residues Ile-20–Ser-47. The Cytoplasmic segment spans residues Asn-48–Arg-51. The chain crosses the membrane as a helical span at residues Tyr-52–Ser-76. The Peroxisomal matrix portion of the chain corresponds to Trp-77 to Pro-104. A helical membrane pass occupies residues Arg-105–Glu-134. Over Glu-135–Ser-139 the chain is Cytoplasmic. The chain crosses the membrane as a helical span at residues Ile-140 to Leu-178. Over Trp-179 to Ser-243 the chain is Peroxisomal matrix. The helical transmembrane segment at Ser-244–Asn-271 threads the bilayer. Topologically, residues Asn-272–Gly-353 are cytoplasmic. Zn(2+)-binding residues include Cys-298, Cys-301, Cys-319, and Cys-322. The RING-type; degenerate zinc finger occupies Cys-298–Gly-337.

Belongs to the pex2/pex10/pex12 family. As to quaternary structure, component of the PEX2-PEX10-PEX12 retrotranslocation channel.

It localises to the peroxisome membrane. It participates in protein modification; protein ubiquitination. Component of a retrotranslocation channel required for peroxisome organization by mediating export of the PEX5 receptor from peroxisomes to the cytosol, thereby promoting PEX5 recycling. The retrotranslocation channel is composed of PEX2, PEX10 and PEX12; each subunit contributing transmembrane segments that coassemble into an open channel that specifically allows the passage of PEX5 through the peroxisomal membrane. PEX12 also regulates PEX5 recycling by activating the E3 ubiquitin-protein ligase activity of PEX10. When PEX5 recycling is compromised, PEX12 stimulates PEX10-mediated polyubiquitination of PEX5, leading to its subsequent degradation. The protein is Peroxisome assembly protein 12-A of Xenopus laevis (African clawed frog).